Here is a 147-residue protein sequence, read N- to C-terminus: 3-dehydroquinate dehydratase 2 (147 aa).

Tyr-23 functions as the Proton acceptor in the catalytic mechanism. Positions 74, 80, and 87 each coordinate substrate. His-100 (proton donor) is an active-site residue. Substrate is bound by residues 101-102 and Arg-111; that span reads IS.

It belongs to the type-II 3-dehydroquinase family. As to quaternary structure, homododecamer.

It carries out the reaction 3-dehydroquinate = 3-dehydroshikimate + H2O. The protein operates within metabolic intermediate biosynthesis; chorismate biosynthesis; chorismate from D-erythrose 4-phosphate and phosphoenolpyruvate: step 3/7. Catalyzes a trans-dehydration via an enolate intermediate. This is 3-dehydroquinate dehydratase 2 (aroQ2) from Agrobacterium fabrum (strain C58 / ATCC 33970) (Agrobacterium tumefaciens (strain C58)).